Reading from the N-terminus, the 116-residue chain is Ferredoxin (116 aa).

2 consecutive 4Fe-4S ferredoxin-type domains span residues 2–31 (TYVV…EGER) and 35–64 (FMLV…PESP). [3Fe-4S] cluster-binding residues include Cys-9 and Cys-17. 4 residues coordinate [4Fe-4S] cluster: Cys-21, Cys-44, Cys-47, and Cys-50. A [3Fe-4S] cluster-binding site is contributed by Cys-54.

The cofactor is [4Fe-4S] cluster. Requires [3Fe-4S] cluster as cofactor.

Ferredoxins are iron-sulfur proteins that transfer electrons in a wide variety of metabolic reactions. The chain is Ferredoxin (fdxA) from Rickettsia conorii (strain ATCC VR-613 / Malish 7).